We begin with the raw amino-acid sequence, 203 residues long: MIGAEHITGVVLAGGRGSRMGGVDKGLQPYRGIPLALHALMRLQPQVGTTMINANRNLAAYESFGVPVWPDTDPDFAGPLSGFLVGLERAETPFVVTVPCDTPDFPDDLVARLAHALEAEDAELAMVRAPDSADAPGAPRPQPVFCLLRSTLLESLVRFVHAGGRKIDRWTAQHRCAMVDFDAAPFFNANTLDELRRLETQRV.

Residues 12 to 14 (LAG), Lys25, Asn53, Asp71, and Asp101 each bind GTP. Asp101 lines the Mg(2+) pocket.

Belongs to the MobA family. As to quaternary structure, monomer. It depends on Mg(2+) as a cofactor.

Its subcellular location is the cytoplasm. It catalyses the reaction Mo-molybdopterin + GTP + H(+) = Mo-molybdopterin guanine dinucleotide + diphosphate. Functionally, transfers a GMP moiety from GTP to Mo-molybdopterin (Mo-MPT) cofactor (Moco or molybdenum cofactor) to form Mo-molybdopterin guanine dinucleotide (Mo-MGD) cofactor. This Methylibium petroleiphilum (strain ATCC BAA-1232 / LMG 22953 / PM1) protein is Molybdenum cofactor guanylyltransferase.